The primary structure comprises 769 residues: Bifunctional glycosyltransferase pgtA (769 aa).

The tract at residues 25-210 (YQGINNLIIS…SVIFKRSIFT (186 aa)) is N-acetylgalactosamine 3-beta-galactosyltransferase. Positions 410-441 (NNINNNNNNNNNNNNNNNNNNNNNNNNNNNNN) are enriched in low complexity. The segment at 410–442 (NNINNNNNNNNNNNNNNNNNNNNNNNNNNNNNS) is disordered. An alpha-1,2-fucosyltransferase region spans residues 442-769 (SILNFISGIN…SVHIGELFIS (328 aa)).

The protein belongs to the glycosyltransferase 2 family.

The catalysed reaction is an N-acetyl-beta-D-glucosaminyl derivative + UDP-alpha-D-galactose = a beta-D-galactosyl-(1-&gt;3)-N-acetyl-beta-D-glucosaminyl derivative + UDP + H(+). The enzyme catalyses a beta-D-galactosyl-(1-&gt;3)-N-acetyl-beta-D-glucosaminyl derivative + GDP-beta-L-fucose = an alpha-L-Fuc-(1-&gt;2)-beta-D-Gal-(1-&gt;3)-beta-D-GlcNAc derivative + GDP + H(+). Its function is as follows. Bifunctional protein composed of 2 glycosyltransferase domains involved in glycosylating skp1. The N-terminal part catalyzes the transfer of a galactose residue to GlcNAc-skp1 in a beta 1-3 linkage. The C-terminal part catalyzes the transfer of a fucose residue to Gal-GlcNAc-skp1 in an alpha 1-2 linkage. The polypeptide is Bifunctional glycosyltransferase pgtA (pgtA) (Dictyostelium discoideum (Social amoeba)).